The sequence spans 607 residues: Serine/threonine-protein kinase sid2 (607 aa).

Phosphoserine is present on residues S56, S60, S65, and S86. Positions 93–108 (DRSGELSYKDNNHWSD) are enriched in basic and acidic residues. A disordered region spans residues 93–118 (DRSGELSYKDNNHWSDRSSTGSPRWE). Residues 109 to 118 (RSSTGSPRWE) show a composition bias toward polar residues. Residues 208–508 (FQTITQVGQG…LKQVMQHPYF (301 aa)) form the Protein kinase domain. ATP contacts are provided by residues 214–222 (VGQGGYGSV) and K237. A Phosphotyrosine modification is found at Y219. The active-site Proton acceptor is D331. S402 is subject to Phosphoserine. The AGC-kinase C-terminal domain maps to 509 to 589 (SKIDWKNVRT…RHQKNSHPTS (81 aa)). Residues 586–607 (HPTSSSSALSSPLSAPSFGTLL) form a disordered region. The span at 589 to 607 (SSSSALSSPLSAPSFGTLL) shows a compositional bias: low complexity.

Belongs to the protein kinase superfamily. Ser/Thr protein kinase family. As to quaternary structure, interacts with mob1 and cdc11.

The protein localises to the cytoplasm. It localises to the cytoskeleton. The protein resides in the microtubule organizing center. Its subcellular location is the spindle pole body. The catalysed reaction is L-seryl-[protein] + ATP = O-phospho-L-seryl-[protein] + ADP + H(+). It carries out the reaction L-threonyl-[protein] + ATP = O-phospho-L-threonyl-[protein] + ADP + H(+). In terms of biological role, part of a signaling pathway. Required for initiation of medial ring constriction and septation. The polypeptide is Serine/threonine-protein kinase sid2 (sid2) (Schizosaccharomyces pombe (strain 972 / ATCC 24843) (Fission yeast)).